A 601-amino-acid chain; its full sequence is Putative pentatricopeptide repeat-containing protein At3g25060, mitochondrial (601 aa).

A mitochondrion-targeting transit peptide spans 1-80 (MVQTKHFCML…KVFDELPQRG (80 aa)). PPR repeat units follow at residues 49-79 (GSSISRDLIASCGRIGEISYARKVFDELPQR), 80-114 (GVSVYNSMIVVYSRGKNPDEVLRLYDQMIAEKIQP), 115-149 (DSSTFTMTIKACLSGLVLEKGEAVWCKAVDFGYKN), 150-180 (DVFVCSSVLNLYMKCGKMDEAEVLFGKMAKR), 181-215 (DVICWTTMVTGFAQAGKSLKAVEFYREMQNEGFGR), 216-250 (DRVVMLGLLQASGDLGDTKMGRSVHGYLYRTGLPM), 251-281 (NVVVETSLVDMYAKVGFIEVASRVFSRMMFK), 282-316 (TAVSWGSLISGFAQNGLANKAFEAVVEMQSLGFQP), 317-347 (DLVTLVGVLVACSQVGSLKTGRLVHCYILKR), 351-381 (DRVTATALMDMYSKCGALSSSREIFEHVGRK), 382-416 (DLVCWNTMISCYGIHGNGQEVVSLFLKMTESNIEP), 417-452 (DHATFASLLSALSHSGLVEQGQHWFSVMINKYKIQP), and 453-487 (SEKHYVCLIDLLARAGRVEEALDMINSEKLDNALP). Residues 488 to 563 (IWVALLSGCI…VPGYSAIEVN (76 aa)) are type E motif. Positions 564-594 (GELRTFLMEDLSHHEHYHMLQVLRNLKTEIR) are type E(+) motif.

This sequence belongs to the PPR family. PCMP-E subfamily.

It is found in the mitochondrion. The polypeptide is Putative pentatricopeptide repeat-containing protein At3g25060, mitochondrial (PCMP-E96) (Arabidopsis thaliana (Mouse-ear cress)).